A 238-amino-acid polypeptide reads, in one-letter code: MAKLGVNIDHIANVRQARQTVEPDPVQFAFLAELGGADSITIHLREDRRHIQDRDIYLLKDTIKTKLNLEMAATEEMLRISKKLLPDYVTLVPEKRKEITTEGGLDVKNNEKYLKNYVNSLKSSNIEVSAFIDPANDQINSSGEIGFDFIELHTGKYAGLKGQDQYVELQKIIESSYYAVDIGLIVNAGHGLNYQNVKKIASINNMNELNIGHSIVSRALAVGLERAVREMKTLISIN.

Asn-7 provides a ligand contact to 3-amino-2-oxopropyl phosphate. Residue 9–10 (DH) participates in 1-deoxy-D-xylulose 5-phosphate binding. Position 18 (Arg-18) interacts with 3-amino-2-oxopropyl phosphate. The Proton acceptor role is filled by His-43. 2 residues coordinate 1-deoxy-D-xylulose 5-phosphate: Arg-45 and His-50. The active-site Proton acceptor is Glu-70. Thr-100 contacts 1-deoxy-D-xylulose 5-phosphate. His-190 serves as the catalytic Proton donor. Residues Gly-191 and 212 to 213 (GH) contribute to the 3-amino-2-oxopropyl phosphate site.

Belongs to the PNP synthase family. Homooctamer; tetramer of dimers.

It localises to the cytoplasm. The enzyme catalyses 3-amino-2-oxopropyl phosphate + 1-deoxy-D-xylulose 5-phosphate = pyridoxine 5'-phosphate + phosphate + 2 H2O + H(+). The protein operates within cofactor biosynthesis; pyridoxine 5'-phosphate biosynthesis; pyridoxine 5'-phosphate from D-erythrose 4-phosphate: step 5/5. Its function is as follows. Catalyzes the complicated ring closure reaction between the two acyclic compounds 1-deoxy-D-xylulose-5-phosphate (DXP) and 3-amino-2-oxopropyl phosphate (1-amino-acetone-3-phosphate or AAP) to form pyridoxine 5'-phosphate (PNP) and inorganic phosphate. The sequence is that of Pyridoxine 5'-phosphate synthase from Prochlorococcus marinus subsp. pastoris (strain CCMP1986 / NIES-2087 / MED4).